A 467-amino-acid chain; its full sequence is Hydroxyacid-oxoacid transhydrogenase, mitochondrial (467 aa).

Residue lysine 445 is modified to N6-acetyllysine. Position 452 is a phosphoserine (serine 452).

It belongs to the iron-containing alcohol dehydrogenase family. Hydroxyacid-oxoacid transhydrogenase subfamily. Expressed in kidney and liver.

The protein resides in the mitochondrion. It carries out the reaction (S)-3-hydroxybutanoate + 2-oxoglutarate = (R)-2-hydroxyglutarate + acetoacetate. The enzyme catalyses 4-hydroxybutanoate + 2-oxoglutarate = (R)-2-hydroxyglutarate + succinate semialdehyde. Its function is as follows. Catalyzes the cofactor-independent reversible oxidation of gamma-hydroxybutyrate (GHB) to succinic semialdehyde (SSA) coupled to reduction of 2-ketoglutarate (2-KG) to D-2-hydroxyglutarate (D-2-HG). L-3-hydroxybutyrate (L-3-OHB) is also a substrate for HOT when using 2-KG as hydrogen acceptor, resulting in the formation of D-2-HG. In Rattus norvegicus (Rat), this protein is Hydroxyacid-oxoacid transhydrogenase, mitochondrial (Adhfe1).